Here is a 266-residue protein sequence, read N- to C-terminus: Beta-lactamase OXA-19 (266 aa).

The signal sequence occupies residues 1 to 20; that stretch reads MKTFAAYVITACLSSTALAS. S67 serves as the catalytic Acyl-ester intermediate. K70 bears the N6-carboxylysine mark. Residue 205 to 207 participates in substrate binding; it reads KTG.

The protein belongs to the class-D beta-lactamase family.

The catalysed reaction is a beta-lactam + H2O = a substituted beta-amino acid. This Pseudomonas aeruginosa protein is Beta-lactamase OXA-19 (bla).